Reading from the N-terminus, the 380-residue chain is Cytochrome b (380 aa).

4 consecutive transmembrane segments (helical) span residues 34–54, 78–99, 114–134, and 179–199; these read FGWL…FLAM, WLLR…YFHI, WNIG…GYVL, and FFTF…IHLL. Residues His84 and His98 each contribute to the heme b site. Heme b is bound by residues His183 and His197. Residue His202 participates in a ubiquinone binding. 4 helical membrane-spanning segments follow: residues 227–247, 289–309, 321–341, and 348–368; these read FKDL…STFA, LGGV…PIIH, AAKA…WIGG, and FISI…LIIP.

It belongs to the cytochrome b family. As to quaternary structure, the cytochrome bc1 complex contains 3 respiratory subunits (MT-CYB, CYC1 and UQCRFS1), 2 core proteins (UQCRC1 and UQCRC2) and probably 6 low-molecular weight proteins. Requires heme b as cofactor.

It localises to the mitochondrion inner membrane. Functionally, component of the ubiquinol-cytochrome c reductase complex (complex III or cytochrome b-c1 complex) that is part of the mitochondrial respiratory chain. The b-c1 complex mediates electron transfer from ubiquinol to cytochrome c. Contributes to the generation of a proton gradient across the mitochondrial membrane that is then used for ATP synthesis. This is Cytochrome b (mt-cyb) from Rana dybowskii (Dybovsky's frog).